The primary structure comprises 79 residues: MNRTNKLILGAVVLGSALLAGCSSNAKIDQLSSDVQTLSAKVDQLSNDVNAMRSDVQAAKDDAARANQRLDNKVLRICK.

Positions 1 to 21 (MNRTNKLILGAVVLGSALLAG) are cleaved as a signal peptide. The N-palmitoyl cysteine moiety is linked to residue Cys-22. Residue Cys-22 is the site of S-diacylglycerol cysteine attachment. Repeats lie at residues 25-35 (NAKIDQLSSDV) and 39-49 (SAKVDQLSNDV). The stretch at 28–76 (IDQLSSDVQTLSAKVDQLSNDVNAMRSDVQAAKDDAARANQRLDNKVLR) forms a coiled coil. The residue at position 79 (Lys-79) is an N6-murein peptidoglycan lysine.

Belongs to the Lpp family. As to quaternary structure, homotrimer.

The protein resides in the cell outer membrane. It localises to the secreted. It is found in the cell wall. Its function is as follows. A highly abundant outer membrane lipoprotein that controls the distance between the inner and outer membranes. The only protein known to be covalently linked to the peptidoglycan network (PGN). Also non-covalently binds the PGN. The link between the cell outer membrane and PGN contributes to maintenance of the structural and functional integrity of the cell envelope, and maintains the correct distance between the PGN and the outer membrane. The sequence is that of Major outer membrane lipoprotein Lpp 3 from Salmonella paratyphi A (strain ATCC 9150 / SARB42).